Reading from the N-terminus, the 318-residue chain is MFLMNMLCLIIPILLAMAFLTLVERKILGYMQLRKGPNIVGPYGLLQPIADAIKLFIKEPLRPLTSSKLMFTLAPMLAFSLALSMWIPMPMPHPLIHLNLGVLFILALSSLAVYSILWSGWASNSKYALIGALRAVAQTISYEVTLAIILLSTMMMNGSFTLSTLTTTQEHMWLIFPLWPLAMMWFISTLAETNRAPFDLTEGESELVSGFNVEYAAGPFALFFMAEYTNIIMMKALTTTLFLGALHNPLLPELFTANFVTKTLALTMAFLWIRASYPRFRYDQLMHLLWKSFLPLTLALCMLHVSLPTVSAGIPPHM.

The next 9 helical transmembrane spans lie at 2 to 22 (FLMN…FLTL), 37 to 57 (PNIV…KLFI), 69 to 89 (LMFT…WIPM), 100 to 120 (LGVL…LWSG), 136 to 156 (VAQT…TMMM), 171 to 191 (HMWL…STLA), 206 to 226 (ELVS…FFMA), 253 to 273 (ELFT…FLWI), and 294 to 314 (LPLT…SAGI).

It belongs to the complex I subunit 1 family.

The protein localises to the mitochondrion inner membrane. It catalyses the reaction a ubiquinone + NADH + 5 H(+)(in) = a ubiquinol + NAD(+) + 4 H(+)(out). Its function is as follows. Core subunit of the mitochondrial membrane respiratory chain NADH dehydrogenase (Complex I) that is believed to belong to the minimal assembly required for catalysis. Complex I functions in the transfer of electrons from NADH to the respiratory chain. The immediate electron acceptor for the enzyme is believed to be ubiquinone. This is NADH-ubiquinone oxidoreductase chain 1 (MT-ND1) from Tolypeutes matacus (Southern three-banded armadillo).